We begin with the raw amino-acid sequence, 472 residues long: Glutamate-1-semialdehyde 2,1-aminomutase 2, chloroplastic (472 aa).

Residues 1 to 36 constitute a chloroplast transit peptide; it reads MAATLTGSGIALGFSCSAKFSKRASSSSNRRCIKMS. Lys-312 is modified (N6-(pyridoxal phosphate)lysine).

It belongs to the class-III pyridoxal-phosphate-dependent aminotransferase family. HemL subfamily. In terms of assembly, homodimer. Requires pyridoxal 5'-phosphate as cofactor. Expressed in leaf primordia and shoot apical meristems (SAM).

The protein localises to the plastid. It is found in the chloroplast. It carries out the reaction (S)-4-amino-5-oxopentanoate = 5-aminolevulinate. It participates in porphyrin-containing compound metabolism; protoporphyrin-IX biosynthesis; 5-aminolevulinate from L-glutamyl-tRNA(Glu): step 2/2. It functions in the pathway porphyrin-containing compound metabolism; chlorophyll biosynthesis. Its function is as follows. Transaminase converting glutamate 1-semialdehyde (GSA) to 5-aminolevulinate (ALA). Involved in the biosynthesis of tetrapyrroles. In Arabidopsis thaliana (Mouse-ear cress), this protein is Glutamate-1-semialdehyde 2,1-aminomutase 2, chloroplastic.